The following is a 353-amino-acid chain: MTLEAIRYRSGSLQILNQLLLPRETVYDEIRSVRDGYEAIKSMKVRGAPAIAIVGCLSLAVELRAGAGAEDLVSFVRDSLCHLTSARPTAVNMGRAARELMEFTENESMEKNTEQLRDSVIGWIEEMLERDVNDNKKIGNYGAQHILSGVPRDSVTILTHCNTGSLATAGYGTALGVVRSLHMLGRLKRLYCTETRPYNQGARLTAYEAVAEGFPATLITDSMAALAMREKSITAVVVGADRVVANGDTANKVGTYQLAIAAKHHGIPFYVAAPSTSCDLSLESGRDIVIEERPAEELTSINGVPVAAPGIDVWNPAFDVTPHQLITGGIITELGVFLPSELQAALTGRLTAL.

Aspartate 241 serves as the catalytic Proton donor.

The protein belongs to the eIF-2B alpha/beta/delta subunits family. MtnA subfamily.

It localises to the cytoplasm. It is found in the nucleus. It catalyses the reaction 5-(methylsulfanyl)-alpha-D-ribose 1-phosphate = 5-(methylsulfanyl)-D-ribulose 1-phosphate. Its pathway is amino-acid biosynthesis; L-methionine biosynthesis via salvage pathway; L-methionine from S-methyl-5-thio-alpha-D-ribose 1-phosphate: step 1/6. Functionally, catalyzes the interconversion of methylthioribose-1-phosphate (MTR-1-P) into methylthioribulose-1-phosphate (MTRu-1-P). The protein is Methylthioribose-1-phosphate isomerase (mri1) of Danio rerio (Zebrafish).